A 466-amino-acid polypeptide reads, in one-letter code: Citrate synthase, mitochondrial (466 aa).

The transit peptide at M1 to S27 directs the protein to the mitochondrion. An SIFI-degron motif is present at residues A2–L21. K57 bears the N6-succinyllysine mark. Residue K76 is modified to N6-acetyllysine; alternate. K76 carries the post-translational modification N6-succinyllysine; alternate. 2 positions are modified to N6-succinyllysine: K103 and K193. S226 is modified (phosphoserine). The active site involves H301. K321 and K327 each carry N6-acetyllysine; alternate. N6-succinyllysine; alternate occurs at positions 321 and 327. The active site involves H347. Residue R356 coordinates oxaloacetate. An N6-acetyllysine; alternate modification is found at K375. An N6-succinyllysine; alternate modification is found at K375. The residue at position 382 (K382) is an N6-acetyllysine. Position 393 is an N6-acetyllysine; alternate (K393). N6-succinyllysine; alternate is present on K393. Residue K395 is modified to N6,N6,N6-trimethyllysine. D402 is an active-site residue. Oxaloacetate-binding residues include R428 and R448. The residue at position 450 (K450) is an N6-succinyllysine. Residue K459 is modified to N6-acetyllysine; alternate. N6-succinyllysine; alternate is present on K459.

This sequence belongs to the citrate synthase family. In terms of assembly, homodimer. Post-translationally, methylated. Trimethylation at Lys-395 by CSKMT decreases citrate synthase activity. In response to mitochondrial stress, the precursor protein is ubiquitinated by the SIFI complex in the cytoplasm before mitochondrial import, leading to its degradation. Within the SIFI complex, UBR4 initiates ubiquitin chain that are further elongated or branched by KCMF1. In terms of tissue distribution, expressed in the head region and flagellum of epididymal sperm.

It localises to the mitochondrion matrix. The enzyme catalyses oxaloacetate + acetyl-CoA + H2O = citrate + CoA + H(+). It participates in carbohydrate metabolism; tricarboxylic acid cycle; isocitrate from oxaloacetate: step 1/2. Its function is as follows. Key enzyme of the Krebs tricarboxylic acid cycle which catalyzes the synthesis of citrate from acetyl coenzyme A and oxaloacetate. This Rattus norvegicus (Rat) protein is Citrate synthase, mitochondrial (Cs).